The chain runs to 151 residues: MRHYEIVFLVHPDQSEQVPGMIERYTSAVKDSGGSVHRLEDWGRRQMAYSINKIHKAHYVLMNIECGDQALEELTTNFRYNDAILRNMVIRCDEAVTEESPIQKAEKENRERKNRAERRAAEAAAATETEKSESEESAEEETSTDTTGEEE.

The segment at 98–151 is disordered; that stretch reads EESPIQKAEKENRERKNRAERRAAEAAAATETEKSESEESAEEETSTDTTGEEE. Residues 135–151 show a composition bias toward acidic residues; it reads EESAEEETSTDTTGEEE.

This sequence belongs to the bacterial ribosomal protein bS6 family.

In terms of biological role, binds together with bS18 to 16S ribosomal RNA. The sequence is that of Small ribosomal subunit protein bS6 from Teredinibacter turnerae (strain ATCC 39867 / T7901).